The following is a 390-amino-acid chain: Zinc transporter 7 (390 aa).

Topologically, residues 1–37 are cytoplasmic; the sequence is MLPLSIKDDEYKPPKFNLVRKVSGWIRSIFSDTTSRN. Residues 38–58 form a helical membrane-spanning segment; the sequence is LFCFLCLNLSFAFVELFYGIW. Topologically, residues 59 to 67 are lumenal; it reads SNSLGLISD. A helical membrane pass occupies residues 68–88; sequence SFHMFFDCTALLAGLAASVIS. Over 89-102 the chain is Cytoplasmic; that stretch reads RWKTNEAFSYGYVR. A helical membrane pass occupies residues 103–123; it reads AEVLAGFVNGLFLIFTAFFIF. Topologically, residues 124 to 140 are lumenal; sequence SEGIERALDTPEVHHER. Residues 141-161 form a helical membrane-spanning segment; the sequence is LLPVSILGFLVNLIGIFVFQH. The tract at residues 161–226 is his-rich loop; that stretch reads HGGGHGHSHE…SHDQSHKHGH (66 aa). Residues 162-250 lie on the Cytoplasmic side of the membrane; it reads GGGHGHSHES…TGSSKQILEG (89 aa). The segment at 167-243 is disordered; that stretch reads HSHESGHGHS…DEPPEEHTGS (77 aa). Residues 177–186 are compositionally biased toward low complexity; the sequence is HSLFNGSLSH. The segment covering 187–208 has biased composition (basic residues); that stretch reads GHSHSHGGSHGHSHGGGHGHSH. Composition is skewed to basic and acidic residues over residues 209–222 and 232–242; these read SHGEGHGHSHDQSH and CHDEPPEEHTG. A helical membrane pass occupies residues 251 to 271; sequence VFLHIVADALGSVGVIISTIL. The Lumenal segment spans residues 272-276; that stretch reads MQRYG. The chain crosses the membrane as a helical span at residues 277–297; it reads LMIADPICSMLIALLIFVSVI. Over 298 to 390 the chain is Cytoplasmic; sequence PLLKQSIGIL…LYVQIDMAAM (93 aa).

The protein belongs to the cation diffusion facilitator (CDF) transporter (TC 2.A.4) family. SLC30A subfamily. In terms of assembly, homooligomer.

It localises to the golgi apparatus membrane. The protein localises to the cytoplasmic vesicle. It is found in the golgi apparatus. Its subcellular location is the trans-Golgi network. The protein resides in the sarcoplasmic reticulum. It localises to the mitochondrion. It catalyses the reaction Zn(2+)(in) = Zn(2+)(out). Functionally, zinc ion transporter mediating zinc entry from the cytosol into the lumen of organelles along the secretory pathway. By contributing to zinc ion homeostasis within the early secretory pathway, regulates the activation and folding of enzymes like alkaline phosphatases. This chain is Zinc transporter 7 (slc30a7), found in Xenopus tropicalis (Western clawed frog).